The sequence spans 310 residues: Cytochrome f (310 aa).

The N-terminal stretch at 1-23 (MRRLIPILLGSLVLSLSILVAPA) is a signal peptide. Residues tyrosine 28, cysteine 48, cysteine 51, and histidine 52 each contribute to the heme site. The helical transmembrane segment at 277–297 (IYGLLAFFVAVSLAQILLVLK) threads the bilayer.

Belongs to the cytochrome f family. The 4 large subunits of the cytochrome b6-f complex are cytochrome b6, subunit IV (17 kDa polypeptide, PetD), cytochrome f and the Rieske protein, while the 4 small subunits are PetG, PetL, PetM and PetN. The complex functions as a dimer. Heme is required as a cofactor.

Its subcellular location is the cellular thylakoid membrane. In terms of biological role, component of the cytochrome b6-f complex, which mediates electron transfer between photosystem II (PSII) and photosystem I (PSI), cyclic electron flow around PSI, and state transitions. The protein is Cytochrome f of Prochlorococcus marinus (strain MIT 9313).